Here is a 231-residue protein sequence, read N- to C-terminus: Aquaporin Z (231 aa).

A run of 2 helical transmembrane segments spans residues 9-29 and 34-54; these read LLGTFVLVFGGCGSVVFAAAF and IGFVGVSLAFGLTVLTMIYAV. Positions 63–65 match the NPA 1 motif; that stretch reads NPA. The next 3 membrane-spanning stretches (helical) occupy residues 82 to 102, 133 to 153, and 160 to 180; these read IPYIISQVIGGILAAAVLYVI, SAIVAEIVLTAIFLIVIIGAT, and GFAPLAIGLALVLINLISIPI. Residues 186–188 carry the NPA 2 motif; it reads NPA. A helical transmembrane segment spans residues 202 to 222; the sequence is LEQLWFFWVMPIIGGIVGGGI.

The protein belongs to the MIP/aquaporin (TC 1.A.8) family. Homotetramer.

The protein localises to the cell inner membrane. It catalyses the reaction H2O(in) = H2O(out). In terms of biological role, channel that permits osmotically driven movement of water in both directions. It is involved in the osmoregulation and in the maintenance of cell turgor during volume expansion in rapidly growing cells. It mediates rapid entry or exit of water in response to abrupt changes in osmolarity. The chain is Aquaporin Z from Photorhabdus laumondii subsp. laumondii (strain DSM 15139 / CIP 105565 / TT01) (Photorhabdus luminescens subsp. laumondii).